The sequence spans 73 residues: Mating-type pheromone BBP1(3) (73 aa).

The tract at residues 1–41 is disordered; that stretch reads MASSVLARPGPSTVLPAMTRPPPPMAHRAAATPSFARSSQP. Position 70 is a cysteine methyl ester (C70). C70 carries S-farnesyl cysteine lipidation. The propeptide at 71–73 is removed in mature form; it reads VVA.

The protein localises to the cell membrane. Functionally, activates B-regulated development. The protein is Mating-type pheromone BBP1(3) (BBP1(3)) of Schizophyllum commune (Split gill fungus).